The chain runs to 422 residues: Multifunctional CCA protein (422 aa).

2 residues coordinate ATP: glycine 8 and arginine 11. Positions 8 and 11 each coordinate CTP. 2 residues coordinate Mg(2+): aspartate 21 and aspartate 23. Arginine 91, arginine 137, and arginine 140 together coordinate ATP. Positions 91, 137, and 140 each coordinate CTP. The HD domain occupies 228 to 329 (TGLHSLMALE…VKLLQSCDAW (102 aa)). Positions 403–422 (FKQDNAPEAQEKGGEDVGLT) are disordered.

This sequence belongs to the tRNA nucleotidyltransferase/poly(A) polymerase family. Bacterial CCA-adding enzyme type 1 subfamily. As to quaternary structure, monomer. Can also form homodimers and oligomers. Requires Mg(2+) as cofactor. Ni(2+) is required as a cofactor.

The enzyme catalyses a tRNA precursor + 2 CTP + ATP = a tRNA with a 3' CCA end + 3 diphosphate. It carries out the reaction a tRNA with a 3' CCA end + 2 CTP + ATP = a tRNA with a 3' CCACCA end + 3 diphosphate. In terms of biological role, catalyzes the addition and repair of the essential 3'-terminal CCA sequence in tRNAs without using a nucleic acid template. Adds these three nucleotides in the order of C, C, and A to the tRNA nucleotide-73, using CTP and ATP as substrates and producing inorganic pyrophosphate. tRNA 3'-terminal CCA addition is required both for tRNA processing and repair. Also involved in tRNA surveillance by mediating tandem CCA addition to generate a CCACCA at the 3' terminus of unstable tRNAs. While stable tRNAs receive only 3'-terminal CCA, unstable tRNAs are marked with CCACCA and rapidly degraded. This chain is Multifunctional CCA protein, found in Hahella chejuensis (strain KCTC 2396).